The sequence spans 108 residues: Nucleoid-associated protein BQ02190 (108 aa).

It belongs to the YbaB/EbfC family. In terms of assembly, homodimer.

The protein resides in the cytoplasm. Its subcellular location is the nucleoid. Functionally, binds to DNA and alters its conformation. May be involved in regulation of gene expression, nucleoid organization and DNA protection. In Bartonella quintana (strain Toulouse) (Rochalimaea quintana), this protein is Nucleoid-associated protein BQ02190.